The chain runs to 419 residues: Gustatory receptor for bitter taste 93a (419 aa).

At 1 to 55 the chain is on the cytoplasmic side; that stretch reads MFSSSSAMTGKRAESWSRLLLLWLYRCARGLLVLSSSLDRDKLQLKATKQGSRNR. The chain crosses the membrane as a helical span at residues 56 to 76; sequence FLHILWRCIVVMIYAGLWPML. Topologically, residues 77 to 90 are extracellular; that stretch reads TSAVIGKRLESYAD. Residues 91 to 111 traverse the membrane as a helical segment; that stretch reads VLALAQSMSVSILAVISFVIQ. Residues 112–145 lie on the Cytoplasmic side of the membrane; the sequence is ARGENQFREVLNRYLALYQRICLTTRLRHLFPTK. The helical transmembrane segment at 146–166 threads the bilayer; it reads FVVFFLLKLFFTLCGCFHEII. The Extracellular portion of the chain corresponds to 167-184; that stretch reads PLFENSHFDDISQMVGTG. The helical transmembrane segment at 185 to 205 threads the bilayer; sequence FGIYMWLGTLCVLDACFLGFL. Topologically, residues 206–277 are cytoplasmic; it reads VSGILYEHMA…NSFRRILQWQ (72 aa). Residues 278–298 traverse the membrane as a helical segment; sequence ILFYIYLNFINICLMLYQYIL. Residues 299 to 305 are Extracellular-facing; sequence HFLNDDE. The chain crosses the membrane as a helical span at residues 306–326; that stretch reads VVFVSIVMAFVKLANLVLLMM. Topologically, residues 327-383 are cytoplasmic; the sequence is CADYTVRQSEVPKKLPLDIVCSDMDERWDKSVETFLGQLQTQRLEIKVLGFFHLNNE. Residues 384-404 traverse the membrane as a helical segment; the sequence is FILLILSAIISYLFILIQFGI. Residues 405–419 are Extracellular-facing; sequence TGGFEASEDIKNRFD.

This sequence belongs to the insect chemoreceptor superfamily. Gustatory receptor (GR) family. Gr93a subfamily. In larvae, is expressed in neurons of the dorsal pharyngeal sense organs.

The protein localises to the cell membrane. Functionally, gustatory receptor required for response to the bitter in taste neurons. Gr93a cells respond to bitter compounds such as caffeine. Flies avoid bitter substances, suggesting that Gr93a neuron activity is sufficient to mediate avoidance behavior. The polypeptide is Gustatory receptor for bitter taste 93a (Gr93a) (Drosophila melanogaster (Fruit fly)).